The primary structure comprises 328 residues: YDG domain-containing protein At5g47150 (328 aa).

The region spanning 176-320 is the YDG domain; it reads GSVPGINIGD…KSVYKFKLCR (145 aa).

Its subcellular location is the nucleus. This chain is YDG domain-containing protein At5g47150, found in Arabidopsis thaliana (Mouse-ear cress).